Here is a 63-residue protein sequence, read N- to C-terminus: Large ribosomal subunit protein uL29 (63 aa).

This sequence belongs to the universal ribosomal protein uL29 family.

This chain is Large ribosomal subunit protein uL29, found in Mannheimia succiniciproducens (strain KCTC 0769BP / MBEL55E).